The primary structure comprises 341 residues: Beta-ketoacyl-[acyl-carrier-protein] synthase III 1 (341 aa).

Catalysis depends on residues C113 and H249. The tract at residues 250 to 254 is ACP-binding; that stretch reads QANIR. Residue N279 is part of the active site.

The protein belongs to the thiolase-like superfamily. FabH family. In terms of assembly, homodimer.

The protein localises to the cytoplasm. The catalysed reaction is malonyl-[ACP] + acetyl-CoA + H(+) = 3-oxobutanoyl-[ACP] + CO2 + CoA. It participates in lipid metabolism; fatty acid biosynthesis. Its function is as follows. Catalyzes the condensation reaction of fatty acid synthesis by the addition to an acyl acceptor of two carbons from malonyl-ACP. Catalyzes the first condensation reaction which initiates fatty acid synthesis and may therefore play a role in governing the total rate of fatty acid production. Possesses both acetoacetyl-ACP synthase and acetyl transacylase activities. Its substrate specificity determines the biosynthesis of branched-chain and/or straight-chain of fatty acids. In Deinococcus radiodurans (strain ATCC 13939 / DSM 20539 / JCM 16871 / CCUG 27074 / LMG 4051 / NBRC 15346 / NCIMB 9279 / VKM B-1422 / R1), this protein is Beta-ketoacyl-[acyl-carrier-protein] synthase III 1.